A 202-amino-acid polypeptide reads, in one-letter code: Glycolipid transfer protein 1 (202 aa).

Residues Asp-52, Asn-56, Trp-99, and His-138 each coordinate a ganglioside GM3 (d18:1(4E)).

It belongs to the GLTP family.

Its function is as follows. May be involved in glycolipids transfer. This chain is Glycolipid transfer protein 1, found in Arabidopsis thaliana (Mouse-ear cress).